The following is a 390-amino-acid chain: Tuftelin (390 aa).

Coiled-coil stretches lie at residues aspartate 88–arginine 126 and aspartate 162–glutamine 351. The segment at serine 358–threonine 390 is disordered.

The protein belongs to the tuftelin family. Interacts with TFIP11. In terms of tissue distribution, expressed in the epidermis (at protein level). Present in the extracellular enamel and is mainly associated with the crystal component.

The protein localises to the secreted. Involved in the structural organization of the epidermis. Involved in the mineralization and structural organization of enamel. In Homo sapiens (Human), this protein is Tuftelin (TUFT1).